Here is a 206-residue protein sequence, read N- to C-terminus: MSVDPMAYEAQFFGFTPQTCLLRIYVAFQDHLFEVMQAVEQVILKKLEDIPNCEITPVQTRKCTEKFLCFMKGRFDNLFGKMEQLILQSILCIPPNILLPEDKCQETNPFSEEKLELLQQEIKELQEKYKVELCTEQALLAELEEQKTVKAKLRETLTFFDELENIGRYQGTSNFRESLASLVQSCRKLQSIRDNVEKESRRLETQ.

The stretch at 102 to 206 (DKCQETNPFS…EKESRRLETQ (105 aa)) forms a coiled coil.

This sequence belongs to the mis12 family. Component of the MIS12 complex composed of MIS12, DSN1, NSL1 and PMF1. Also interacts with KNL1, CBX3, CBX5, NDC80 and ZWINT.

It localises to the chromosome. Its subcellular location is the centromere. The protein resides in the kinetochore. Part of the MIS12 complex which is required for normal chromosome alignment and segregation and for kinetochore formation during mitosis. Essential for proper kinetochore microtubule attachments. This Mus musculus (Mouse) protein is Protein MIS12 homolog.